The following is a 916-amino-acid chain: Phosphoenolpyruvate carboxylase (916 aa).

Residues H144 and K578 contribute to the active site.

Belongs to the PEPCase type 1 family. Requires Mg(2+) as cofactor.

It catalyses the reaction oxaloacetate + phosphate = phosphoenolpyruvate + hydrogencarbonate. In terms of biological role, forms oxaloacetate, a four-carbon dicarboxylic acid source for the tricarboxylic acid cycle. This Aromatoleum aromaticum (strain DSM 19018 / LMG 30748 / EbN1) (Azoarcus sp. (strain EbN1)) protein is Phosphoenolpyruvate carboxylase.